We begin with the raw amino-acid sequence, 230 residues long: 6-carboxyhexanoate--CoA ligase (230 aa).

It belongs to the BioW family. Homodimer. Mg(2+) is required as a cofactor.

It catalyses the reaction heptanedioate + ATP + CoA = 6-carboxyhexanoyl-CoA + AMP + diphosphate. Its pathway is metabolic intermediate metabolism; pimeloyl-CoA biosynthesis; pimeloyl-CoA from pimelate: step 1/1. In terms of biological role, catalyzes the transformation of pimelate into pimeloyl-CoA with concomitant hydrolysis of ATP to AMP. This Staphylococcus aureus (strain MSSA476) protein is 6-carboxyhexanoate--CoA ligase.